Consider the following 421-residue polypeptide: SH2 domain-containing protein 4A (421 aa).

Phosphoserine is present on residues serine 117 and serine 123. Positions 132–271 are disordered; the sequence is DLQAMKKTEP…FLQPLGIPPK (140 aa). Composition is skewed to basic and acidic residues over residues 163 to 201 and 211 to 230; these read TRKD…KEDS and KAAD…DYKR. Serine 232 is modified (phosphoserine). Positions 315–407 constitute an SH2 domain; the sequence is WFHGILTLKK…LGKELLLYPC (93 aa).

In terms of assembly, interacts with ESR1. In the kidney, expressed only in the glomerulus. Expressed in T-cells, B-cells, macrophages and dendritic cells (at protein level). In adult, highest levels are found in muscle and lung with lower levels in kidney.

Its subcellular location is the cytoplasm. Inhibits estrogen-induced cell proliferation by competing with PLCG for binding to ESR1, blocking the effect of estrogen on PLCG and repressing estrogen-induced proliferation. May play a role in T-cell development and function. The protein is SH2 domain-containing protein 4A (Sh2d4a) of Mus musculus (Mouse).